Here is a 212-residue protein sequence, read N- to C-terminus: Disintegrin-like halysetin (212 aa).

Residues 4 to 90 (PPVCGNELLE…ECPADVFHKN (87 aa)) enclose the Disintegrin domain. Intrachain disulfides connect Cys-7–Cys-26, Cys-18–Cys-36, Cys-62–Cys-82, Cys-69–Cys-94, Cys-101–Cys-106, Cys-113–Cys-128, Cys-151–Cys-158, Cys-163–Cys-174, and Cys-200–Cys-205. The D/ECD-tripeptide motif lies at 68–70 (ECD).

Belongs to the venom metalloproteinase (M12B) family. P-III subfamily. P-IIIb sub-subfamily. Monomer. In terms of tissue distribution, expressed by the venom gland.

The protein localises to the secreted. Its function is as follows. Inhibits human platelet aggregation stimulated by collagen with an IC(50) of 420 nM. The polypeptide is Disintegrin-like halysetin (Gloydius halys (Chinese water mocassin)).